The sequence spans 481 residues: Protein nucleotidyltransferase YdiU (481 aa).

Residues Gly85, Gly87, Arg88, Lys108, Asp120, Gly121, Arg172, and Arg179 each contribute to the ATP site. Asp248 acts as the Proton acceptor in catalysis. 2 residues coordinate Mg(2+): Asn249 and Asp258. Residue Asp258 coordinates ATP.

This sequence belongs to the SELO family. Mg(2+) is required as a cofactor. Requires Mn(2+) as cofactor.

It carries out the reaction L-seryl-[protein] + ATP = 3-O-(5'-adenylyl)-L-seryl-[protein] + diphosphate. The enzyme catalyses L-threonyl-[protein] + ATP = 3-O-(5'-adenylyl)-L-threonyl-[protein] + diphosphate. It catalyses the reaction L-tyrosyl-[protein] + ATP = O-(5'-adenylyl)-L-tyrosyl-[protein] + diphosphate. The catalysed reaction is L-histidyl-[protein] + UTP = N(tele)-(5'-uridylyl)-L-histidyl-[protein] + diphosphate. It carries out the reaction L-seryl-[protein] + UTP = O-(5'-uridylyl)-L-seryl-[protein] + diphosphate. The enzyme catalyses L-tyrosyl-[protein] + UTP = O-(5'-uridylyl)-L-tyrosyl-[protein] + diphosphate. Functionally, nucleotidyltransferase involved in the post-translational modification of proteins. It can catalyze the addition of adenosine monophosphate (AMP) or uridine monophosphate (UMP) to a protein, resulting in modifications known as AMPylation and UMPylation. The chain is Protein nucleotidyltransferase YdiU from Cereibacter sphaeroides (strain ATCC 17023 / DSM 158 / JCM 6121 / CCUG 31486 / LMG 2827 / NBRC 12203 / NCIMB 8253 / ATH 2.4.1.) (Rhodobacter sphaeroides).